Reading from the N-terminus, the 500-residue chain is Protein ASPARTIC PROTEASE IN GUARD CELL 1 (500 aa).

The signal sequence occupies residues Met1 to Ala24. The region spanning Tyr162–Ser496 is the Peptidase A1 domain. Asp180 is an active-site residue. Disulfide bonds link Cys190-Cys193, Cys196-Cys271, Cys217-Cys235, Cys222-Cys230, Cys307-Cys500, and Cys419-Cys461. Residue Asp379 is part of the active site.

This sequence belongs to the peptidase A1 family. As to expression, expressed in young seedlings, leaves, guard-cells, stems, flowers and siliques, but not in roots or mesophyll cells.

The protein localises to the endoplasmic reticulum. With respect to regulation, inhibited by pepstatin A. Functionally, aspartic protease involved in drought avoidance through abscisic acid signaling. This is Protein ASPARTIC PROTEASE IN GUARD CELL 1 (ASPG1) from Arabidopsis thaliana (Mouse-ear cress).